The primary structure comprises 280 residues: Pantothenate synthetase (280 aa).

30–37 (MGYLHEGH) contributes to the ATP binding site. The active-site Proton donor is the His37. Gln61 contributes to the (R)-pantoate binding site. Gln61 lines the beta-alanine pocket. Position 147–150 (147–150 (GQKD)) interacts with ATP. Gln153 is a (R)-pantoate binding site. Residues Val176 and 184-187 (MSSR) each bind ATP.

Belongs to the pantothenate synthetase family. In terms of assembly, homodimer.

The protein localises to the cytoplasm. The catalysed reaction is (R)-pantoate + beta-alanine + ATP = (R)-pantothenate + AMP + diphosphate + H(+). The protein operates within cofactor biosynthesis; (R)-pantothenate biosynthesis; (R)-pantothenate from (R)-pantoate and beta-alanine: step 1/1. In terms of biological role, catalyzes the condensation of pantoate with beta-alanine in an ATP-dependent reaction via a pantoyl-adenylate intermediate. In Thermosipho melanesiensis (strain DSM 12029 / CIP 104789 / BI429), this protein is Pantothenate synthetase.